A 424-amino-acid polypeptide reads, in one-letter code: Tyrosine--tRNA ligase (424 aa).

Tyr-37 serves as a coordination point for L-tyrosine. The 'HIGH' region signature appears at Pro-42–His-51. Residues Tyr-175 and Gln-179 each coordinate L-tyrosine. The 'KMSKS' region signature appears at Lys-235–Thr-239. ATP is bound at residue Lys-238. An S4 RNA-binding domain is found at Ala-357–Gly-414.

This sequence belongs to the class-I aminoacyl-tRNA synthetase family. TyrS type 1 subfamily. As to quaternary structure, homodimer.

It is found in the cytoplasm. It carries out the reaction tRNA(Tyr) + L-tyrosine + ATP = L-tyrosyl-tRNA(Tyr) + AMP + diphosphate + H(+). Catalyzes the attachment of tyrosine to tRNA(Tyr) in a two-step reaction: tyrosine is first activated by ATP to form Tyr-AMP and then transferred to the acceptor end of tRNA(Tyr). The sequence is that of Tyrosine--tRNA ligase from Serratia proteamaculans (strain 568).